The chain runs to 745 residues: MKESFYIEGMTCTACSSGIERSLGRKSFVKKIEVSLLNKSANIEFNENETNLDEIFKLIEKLGYSPKKTLAEEKKEFFSPNVKLALAVIFTLFVVYLSMGAMLSPSLLPESLLAINNHSNFLNACLQLIGALIVMHLGRDFYIQGFKALWHRQPNMSSLIAIGTSAALISSLWQLYLVYTNHYTDQWSYGHYYFESVCVILMFVMVGKRIENVSKDKALDAMQALMKNAPKTALKMQNNQQIEVLVDSIVVGDILKVLPGSAIAVDGEIIEGEGELDESMLSGEALPVYKKVGDKVFSGTLNSHTSFLMKATQNNKNSTLSQIIEMIHNAQSSKAEISRLADKVSSVFVPSVIAIAILAFVVWLIIAPKPDFWWNFGIALEVFVSVLVISCPCALGLATPMSILVANQKASSLGLFFKDAKSLEKARLVNTIVFDKTGTLTNGKPVVKSVHSKIELLELLSLAGSIEKSSEHVIAKGIVEYAKERNAPLKEMSEVKVKTGFGISAKTDYQGIKEIIKVGNSEFFNPINTLEIKENGILVFVGRAISEKEDELLGVFVLEDLPKKGVKEHIAQIKNLGINTFLLSGDNRENVKKCALELGIDGYISNAKPQDKLNKIKELKEQGQIVMMVGDGLNDAPSLAMNDVAVVMAKGSDVSVQAADIVSFNNDIKSVYSAIKLSQATIKNIKENLFWAFCYNSVFIPLACGVLYKANIMLSPAIAGLAMSLSSVSVVLNSQRLRNFKIKDH.

One can recognise an HMA domain in the interval 1 to 67; the sequence is MKESFYIEGM…LIEKLGYSPK (67 aa). The Cytoplasmic segment spans residues 1–83; the sequence is MKESFYIEGM…KKEFFSPNVK (83 aa). The Cu cation site is built by cysteine 12 and cysteine 15. A helical transmembrane segment spans residues 84 to 104; that stretch reads LALAVIFTLFVVYLSMGAMLS. Over 105–124 the chain is Extracellular; that stretch reads PSLLPESLLAINNHSNFLNA. A helical membrane pass occupies residues 125-144; sequence CLQLIGALIVMHLGRDFYIQ. Topologically, residues 145–151 are cytoplasmic; it reads GFKALWH. A helical transmembrane segment spans residues 152–172; the sequence is RQPNMSSLIAIGTSAALISSL. Topologically, residues 173 to 194 are extracellular; sequence WQLYLVYTNHYTDQWSYGHYYF. The helical transmembrane segment at 195–215 threads the bilayer; sequence ESVCVILMFVMVGKRIENVSK. At 216 to 343 the chain is on the cytoplasmic side; that stretch reads DKALDAMQAL…KAEISRLADK (128 aa). A helical membrane pass occupies residues 344–366; sequence VSSVFVPSVIAIAILAFVVWLII. Residues 367–379 are Extracellular-facing; the sequence is APKPDFWWNFGIA. Residues 380-397 form a helical membrane-spanning segment; sequence LEVFVSVLVISCPCALGL. Residues 398–685 are Cytoplasmic-facing; the sequence is ATPMSILVAN…KLSQATIKNI (288 aa). Aspartate 435 (4-aspartylphosphate intermediate) is an active-site residue. Aspartate 631 and aspartate 635 together coordinate Mg(2+). Residues 686–705 form a helical membrane-spanning segment; it reads KENLFWAFCYNSVFIPLACG. The Extracellular portion of the chain corresponds to 706-716; the sequence is VLYKANIMLSP. The helical transmembrane segment at 717–735 threads the bilayer; the sequence is AIAGLAMSLSSVSVVLNSQ. The Cytoplasmic segment spans residues 736-745; sequence RLRNFKIKDH.

The protein belongs to the cation transport ATPase (P-type) (TC 3.A.3) family. Type IB subfamily.

Its subcellular location is the cell membrane. It catalyses the reaction Cu(2+)(in) + ATP + H2O = Cu(2+)(out) + ADP + phosphate + H(+). Functionally, probably involved in copper export. This Helicobacter pylori (Campylobacter pylori) protein is Copper-transporting ATPase (copA).